The following is an 81-amino-acid chain: Protein PYP1 (81 aa).

A chloroplast-targeting transit peptide spans 1–25; sequence MAFVSGFTGMPVTARVSKAVCRTRM. Residues 27–57 are disordered; it reads LEGGKSSGGGEATRDPEPTAVDPNDPKGKQQ.

The protein resides in the plastid. The protein localises to the chloroplast. This Pyropia yezoensis (Susabi-nori) protein is Protein PYP1.